The primary structure comprises 496 residues: Angiopoietin-2 (496 aa).

The N-terminal stretch at 1–18 is a signal peptide; that stretch reads MWQIVFFTLSCDLVLAAA. 6 N-linked (GlcNAc...) asparagine glycosylation sites follow: Asn89, Asn119, Asn133, Asn151, Asn240, and Asn304. Residues 166-248 are a coiled coil; it reads STNKLEKQIL…VNNSVLQKQQ (83 aa). In terms of domain architecture, Fibrinogen C-terminal spans 275–495; the sequence is KEEQISFRDC…ATTMMIRPAD (221 aa). Residues Cys284 and Cys313 are joined by a disulfide bond. Ca(2+) is bound by residues Asp429, Asp431, Cys433, and Cys435. 2 disulfides stabilise this stretch: Cys433–Cys435 and Cys437–Cys450.

In terms of assembly, interacts with TEK/TIE2, competing for the same binding site as ANGPT1. Interacts with ITGA5. Interacts with SVEP1/polydom. Interacts with THBD; this interaction significantly inhibits the generation of activated PC and TAFIa/CPB2 by the thrombin/thrombomodulin complex.

It localises to the secreted. Binds to TEK/TIE2, competing for the ANGPT1 binding site, and modulating ANGPT1 signaling. Can induce tyrosine phosphorylation of TEK/TIE2 in the absence of ANGPT1. In the absence of angiogenic inducers, such as VEGF, ANGPT2-mediated loosening of cell-matrix contacts may induce endothelial cell apoptosis with consequent vascular regression. In concert with VEGF, it may facilitate endothelial cell migration and proliferation, thus serving as a permissive angiogenic signal. Involved in the regulation of lymphangiogenesis. This is Angiopoietin-2 (ANGPT2) from Homo sapiens (Human).